Consider the following 486-residue polypeptide: Protein nucleotidyltransferase YdiU (486 aa).

ATP is bound by residues Gly-90, Gly-92, Arg-93, Lys-113, Asp-125, Gly-126, Arg-176, and Arg-183. The active-site Proton acceptor is Asp-252. Mg(2+)-binding residues include Asn-253 and Asp-262. An ATP-binding site is contributed by Asp-262.

This sequence belongs to the SELO family. It depends on Mg(2+) as a cofactor. Requires Mn(2+) as cofactor.

The catalysed reaction is L-seryl-[protein] + ATP = 3-O-(5'-adenylyl)-L-seryl-[protein] + diphosphate. It carries out the reaction L-threonyl-[protein] + ATP = 3-O-(5'-adenylyl)-L-threonyl-[protein] + diphosphate. It catalyses the reaction L-tyrosyl-[protein] + ATP = O-(5'-adenylyl)-L-tyrosyl-[protein] + diphosphate. The enzyme catalyses L-histidyl-[protein] + UTP = N(tele)-(5'-uridylyl)-L-histidyl-[protein] + diphosphate. The catalysed reaction is L-seryl-[protein] + UTP = O-(5'-uridylyl)-L-seryl-[protein] + diphosphate. It carries out the reaction L-tyrosyl-[protein] + UTP = O-(5'-uridylyl)-L-tyrosyl-[protein] + diphosphate. Nucleotidyltransferase involved in the post-translational modification of proteins. It can catalyze the addition of adenosine monophosphate (AMP) or uridine monophosphate (UMP) to a protein, resulting in modifications known as AMPylation and UMPylation. The chain is Protein nucleotidyltransferase YdiU from Pseudomonas putida (strain W619).